The primary structure comprises 2313 residues: Protein Ycf2 (2313 aa).

1606–1613 (GSMETGRS) provides a ligand contact to ATP.

This sequence belongs to the Ycf2 family.

The protein localises to the plastid. The protein resides in the chloroplast stroma. Probable ATPase of unknown function. Its presence in a non-photosynthetic plant (Epifagus virginiana) and experiments in tobacco indicate that it has an essential function which is probably not related to photosynthesis. This Psilotum nudum (Whisk fern) protein is Protein Ycf2.